We begin with the raw amino-acid sequence, 299 residues long: Oxygen-dependent coproporphyrinogen-III oxidase (299 aa).

Substrate is bound at residue serine 92. Histidine 96 and histidine 106 together coordinate a divalent metal cation. Histidine 106 serves as the catalytic Proton donor. 108 to 110 (NVR) is a binding site for substrate. A divalent metal cation is bound by residues histidine 145 and histidine 175. The interval 239 to 274 (YVEFNLVYDRGTLFGLQSGGRAESILMSLPPRVRWE) is important for dimerization. Residue 257–259 (GGR) coordinates substrate.

Belongs to the aerobic coproporphyrinogen-III oxidase family. In terms of assembly, homodimer. Requires a divalent metal cation as cofactor.

It localises to the cytoplasm. The enzyme catalyses coproporphyrinogen III + O2 + 2 H(+) = protoporphyrinogen IX + 2 CO2 + 2 H2O. The protein operates within porphyrin-containing compound metabolism; protoporphyrin-IX biosynthesis; protoporphyrinogen-IX from coproporphyrinogen-III (O2 route): step 1/1. Functionally, involved in the heme biosynthesis. Catalyzes the aerobic oxidative decarboxylation of propionate groups of rings A and B of coproporphyrinogen-III to yield the vinyl groups in protoporphyrinogen-IX. The polypeptide is Oxygen-dependent coproporphyrinogen-III oxidase (Xanthomonas oryzae pv. oryzae (strain MAFF 311018)).